The sequence spans 428 residues: MSSDFFIPDPEGLIPSAEGYFGAYGGKFIPEALVAAVDEVAVEYDKAKSDPAFAAELNELMVNYTGRPSALTEVPRFAEHAGGARIFLKREDLNHTGSHKINNVLGQALLTKRMGKTRVIAETGAGQHGVATATACALFGLDCTIYMGEIDTERQALNVARMRMLGAEVVAVKSGSRTLKDAINEAFRDWVANVDRTHYLFGTVAGPHPFPAMVRDFHRVIGVEARRQILERAGRLPDAAVACVGGGSNAIGLFHAFIPDEGVRLVGCEPAGHGVETGEHAATLTAGEPGILHGSRSYVLQDDEGQITEPYSISAGLDYPGIGPEHSYLKDVGRGEYRAVTDDAAMQALRLLSRTEGIIPAIESAHALAGALDLGKELGKDGLILVNLSGRGDKDMDTAARYFGLYDADAAVEADADSDRAEIEGDAK.

Lysine 100 carries the N6-(pyridoxal phosphate)lysine modification.

Belongs to the TrpB family. Tetramer of two alpha and two beta chains. Requires pyridoxal 5'-phosphate as cofactor.

The catalysed reaction is (1S,2R)-1-C-(indol-3-yl)glycerol 3-phosphate + L-serine = D-glyceraldehyde 3-phosphate + L-tryptophan + H2O. The protein operates within amino-acid biosynthesis; L-tryptophan biosynthesis; L-tryptophan from chorismate: step 5/5. Its function is as follows. The beta subunit is responsible for the synthesis of L-tryptophan from indole and L-serine. The protein is Tryptophan synthase beta chain of Streptomyces griseus subsp. griseus (strain JCM 4626 / CBS 651.72 / NBRC 13350 / KCC S-0626 / ISP 5235).